We begin with the raw amino-acid sequence, 72 residues long: Translation initiation factor IF-1 (72 aa).

One can recognise an S1-like domain in the interval 1–72 (MAKEEAIEVE…TRGRIIFRER (72 aa)).

The protein belongs to the IF-1 family. As to quaternary structure, component of the 30S ribosomal translation pre-initiation complex which assembles on the 30S ribosome in the order IF-2 and IF-3, IF-1 and N-formylmethionyl-tRNA(fMet); mRNA recruitment can occur at any time during PIC assembly.

It localises to the cytoplasm. Functionally, one of the essential components for the initiation of protein synthesis. Stabilizes the binding of IF-2 and IF-3 on the 30S subunit to which N-formylmethionyl-tRNA(fMet) subsequently binds. Helps modulate mRNA selection, yielding the 30S pre-initiation complex (PIC). Upon addition of the 50S ribosomal subunit IF-1, IF-2 and IF-3 are released leaving the mature 70S translation initiation complex. The sequence is that of Translation initiation factor IF-1 from Treponema denticola (strain ATCC 35405 / DSM 14222 / CIP 103919 / JCM 8153 / KCTC 15104).